A 100-amino-acid polypeptide reads, in one-letter code: NADH-quinone oxidoreductase subunit K (100 aa).

3 helical membrane-spanning segments follow: residues 4 to 24 (LQHG…GLLI), 28 to 48 (LLFM…AFVV), and 60 to 80 (VMYI…LALL).

The protein belongs to the complex I subunit 4L family. As to quaternary structure, NDH-1 is composed of 13 different subunits. Subunits NuoA, H, J, K, L, M, N constitute the membrane sector of the complex.

It is found in the cell inner membrane. It carries out the reaction a quinone + NADH + 5 H(+)(in) = a quinol + NAD(+) + 4 H(+)(out). NDH-1 shuttles electrons from NADH, via FMN and iron-sulfur (Fe-S) centers, to quinones in the respiratory chain. The immediate electron acceptor for the enzyme in this species is believed to be ubiquinone. Couples the redox reaction to proton translocation (for every two electrons transferred, four hydrogen ions are translocated across the cytoplasmic membrane), and thus conserves the redox energy in a proton gradient. This is NADH-quinone oxidoreductase subunit K from Pectobacterium carotovorum subsp. carotovorum (strain PC1).